Here is a 200-residue protein sequence, read N- to C-terminus: Transcriptional repressor NrdR (200 aa).

The segment at 3-34 is a zinc-finger region; that stretch reads CPFCQNPDTKVIDTRISDDGHSIRRRRECPNC. One can recognise an ATP-cone domain in the interval 46–136; sequence LLVKKRSGNV…VYQNFEDLED (91 aa).

The protein belongs to the NrdR family. Zn(2+) is required as a cofactor.

Its function is as follows. Negatively regulates transcription of bacterial ribonucleotide reductase nrd genes and operons by binding to NrdR-boxes. The chain is Transcriptional repressor NrdR from Bifidobacterium animalis subsp. lactis (strain AD011).